The following is a 307-amino-acid chain: tRNA pseudouridine synthase B (307 aa).

The Nucleophile role is filled by Asp38.

This sequence belongs to the pseudouridine synthase TruB family. Type 1 subfamily.

The enzyme catalyses uridine(55) in tRNA = pseudouridine(55) in tRNA. Responsible for synthesis of pseudouridine from uracil-55 in the psi GC loop of transfer RNAs. In Bacillus anthracis, this protein is tRNA pseudouridine synthase B.